The primary structure comprises 572 residues: Sulfite reductase [NADPH] hemoprotein beta-component (572 aa).

[4Fe-4S] cluster-binding residues include Cys437, Cys443, Cys482, and Cys486. Cys486 serves as a coordination point for siroheme.

This sequence belongs to the nitrite and sulfite reductase 4Fe-4S domain family. In terms of assembly, alpha(8)-beta(8). The alpha component is a flavoprotein, the beta component is a hemoprotein. Siroheme serves as cofactor. The cofactor is [4Fe-4S] cluster.

The enzyme catalyses hydrogen sulfide + 3 NADP(+) + 3 H2O = sulfite + 3 NADPH + 4 H(+). It participates in sulfur metabolism; hydrogen sulfide biosynthesis; hydrogen sulfide from sulfite (NADPH route): step 1/1. Functionally, component of the sulfite reductase complex that catalyzes the 6-electron reduction of sulfite to sulfide. This is one of several activities required for the biosynthesis of L-cysteine from sulfate. This chain is Sulfite reductase [NADPH] hemoprotein beta-component, found in Staphylococcus epidermidis (strain ATCC 35984 / DSM 28319 / BCRC 17069 / CCUG 31568 / BM 3577 / RP62A).